Here is a 77-residue protein sequence, read N- to C-terminus: uncharacterized protein (77 aa).

This is an uncharacterized protein from Vaccinia virus (strain Copenhagen) (VACV).